The following is an 818-amino-acid chain: Protein Cep78 homolog (818 aa).

3 disordered regions span residues 513-589, 691-748, and 768-798; these read LDVE…HEFA, RQAN…TEAT, and KQSESMSLTEEAGDGDAGGGGGSGDFGDQNV. Residues 514–539 show a composition bias toward acidic residues; that stretch reads DVEEEEEEEEEEQQAEESQSESEPQN. Over residues 561–589 the composition is skewed to basic and acidic residues; it reads VRSEIKYVENNPKEAAKKNRESKSDHEFA. The segment covering 782–792 has biased composition (gly residues); sequence GDAGGGGGSGD.

It belongs to the CEP78 family.

It is found in the cytoplasm. Its subcellular location is the cytoskeleton. The protein resides in the microtubule organizing center. The protein localises to the centrosome. It localises to the centriole. It is found in the cilium basal body. Functionally, may play a role in cilium biogenesis. The chain is Protein Cep78 homolog from Drosophila melanogaster (Fruit fly).